A 180-amino-acid chain; its full sequence is MSEEVKEQNLPEVEPVQEAASDSVNLDALGDISKVEKLEKELGEITDKYYRANAEFENIKKRYEKEKADVASYANEKFARDLLPVIDALEIAANFDPEDDEFAKKIKEGILITINQFKKCFEKHGVSEIATDADFDPNVHNAVLRVDSEEKQSGQIVQALQKGYMINGRVLRPAMVSVAN.

The disordered stretch occupies residues 1–21; that stretch reads MSEEVKEQNLPEVEPVQEAAS.

The protein belongs to the GrpE family. Homodimer.

The protein localises to the cytoplasm. In terms of biological role, participates actively in the response to hyperosmotic and heat shock by preventing the aggregation of stress-denatured proteins, in association with DnaK and GrpE. It is the nucleotide exchange factor for DnaK and may function as a thermosensor. Unfolded proteins bind initially to DnaJ; upon interaction with the DnaJ-bound protein, DnaK hydrolyzes its bound ATP, resulting in the formation of a stable complex. GrpE releases ADP from DnaK; ATP binding to DnaK triggers the release of the substrate protein, thus completing the reaction cycle. Several rounds of ATP-dependent interactions between DnaJ, DnaK and GrpE are required for fully efficient folding. This Campylobacter concisus (strain 13826) protein is Protein GrpE.